A 933-amino-acid chain; its full sequence is Isoleucine--tRNA ligase (933 aa).

The 'HIGH' region signature appears at 57-67 (PYANGNIHVGH). Glutamate 554 provides a ligand contact to L-isoleucyl-5'-AMP. Residues 595–599 (KMSKS) carry the 'KMSKS' region motif. An ATP-binding site is contributed by lysine 598.

Belongs to the class-I aminoacyl-tRNA synthetase family. IleS type 1 subfamily. Monomer.

Its subcellular location is the cytoplasm. The catalysed reaction is tRNA(Ile) + L-isoleucine + ATP = L-isoleucyl-tRNA(Ile) + AMP + diphosphate. In terms of biological role, catalyzes the attachment of isoleucine to tRNA(Ile). As IleRS can inadvertently accommodate and process structurally similar amino acids such as valine, to avoid such errors it has two additional distinct tRNA(Ile)-dependent editing activities. One activity is designated as 'pretransfer' editing and involves the hydrolysis of activated Val-AMP. The other activity is designated 'posttransfer' editing and involves deacylation of mischarged Val-tRNA(Ile). The sequence is that of Isoleucine--tRNA ligase from Streptococcus pyogenes serotype M18 (strain MGAS8232).